Consider the following 363-residue polypeptide: G kinase-anchoring protein 1 (363 aa).

The segment at 1-93 (MASAVLSSVP…SHAICNAQHE (93 aa)) is interaction with IRS1. Disordered stretches follow at residues 20–111 (QVDS…NWQE) and 145–171 (EYEN…HQGK). Serine 23, serine 25, and serine 27 each carry phosphoserine. Residues 39 to 48 (TGKSQTNKST) are compositionally biased toward polar residues. Positions 43–75 (QTNKSTTNEKKREKRRKKKEQQQSEANELRNLA) form a coiled coil. A compositionally biased stretch (basic and acidic residues) spans 102-111 (KDSREENWQE). The residue at position 104 (serine 104) is a Phosphoserine; by PKG. Coiled-coil stretches lie at residues 126-158 (ADLE…QSKV) and 240-350 (EHNQ…YQGG).

It belongs to the GKAP1 family. As to quaternary structure, interacts with PRKG1 and IRS1.

Its subcellular location is the golgi apparatus. Functionally, regulates insulin-dependent IRS1 tyrosine phosphorylation in adipocytes by modulating the availability of IRS1 to IR tyrosine kinase. Its association with IRS1 is required for insulin-induced translocation of SLC2A4 to the cell membrane. Involved in TNF-induced impairment of insulin-dependent IRS1 tyrosine phosphorylation. The chain is G kinase-anchoring protein 1 (GKAP1) from Bos taurus (Bovine).